Consider the following 74-residue polypeptide: Translation initiation factor IF-1 (74 aa).

Residues 1-72 (MAKQDAIEME…TKGRITYRLR (72 aa)) enclose the S1-like domain.

The protein belongs to the IF-1 family. In terms of assembly, component of the 30S ribosomal translation pre-initiation complex which assembles on the 30S ribosome in the order IF-2 and IF-3, IF-1 and N-formylmethionyl-tRNA(fMet); mRNA recruitment can occur at any time during PIC assembly.

It is found in the cytoplasm. In terms of biological role, one of the essential components for the initiation of protein synthesis. Stabilizes the binding of IF-2 and IF-3 on the 30S subunit to which N-formylmethionyl-tRNA(fMet) subsequently binds. Helps modulate mRNA selection, yielding the 30S pre-initiation complex (PIC). Upon addition of the 50S ribosomal subunit IF-1, IF-2 and IF-3 are released leaving the mature 70S translation initiation complex. This Acaryochloris marina (strain MBIC 11017) protein is Translation initiation factor IF-1.